Reading from the N-terminus, the 55-residue chain is Large ribosomal subunit protein bL32c (55 aa).

The disordered stretch occupies residues 1-24 (MAVPKKRTSKSKKNARKANWKRKG).

This sequence belongs to the bacterial ribosomal protein bL32 family.

Its subcellular location is the plastid. It is found in the chloroplast. This is Large ribosomal subunit protein bL32c from Phaeodactylum tricornutum (strain CCAP 1055/1).